We begin with the raw amino-acid sequence, 132 residues long: Small ribosomal subunit protein bS6 (132 aa).

Positions 99 to 132 are disordered; the sequence is ASPMVKAKDERRGDRREDFANETADDADAGDSEE. A compositionally biased stretch (basic and acidic residues) spans 104-117; sequence KAKDERRGDRREDF. Residues 121 to 132 are compositionally biased toward acidic residues; sequence TADDADAGDSEE.

This sequence belongs to the bacterial ribosomal protein bS6 family.

Its function is as follows. Binds together with bS18 to 16S ribosomal RNA. The chain is Small ribosomal subunit protein bS6 from Serratia proteamaculans (strain 568).